Consider the following 445-residue polypeptide: Proline--tRNA ligase (445 aa).

It belongs to the class-II aminoacyl-tRNA synthetase family. ProS type 2 subfamily. As to quaternary structure, homodimer.

The protein localises to the cytoplasm. It catalyses the reaction tRNA(Pro) + L-proline + ATP = L-prolyl-tRNA(Pro) + AMP + diphosphate. Functionally, catalyzes the attachment of proline to tRNA(Pro) in a two-step reaction: proline is first activated by ATP to form Pro-AMP and then transferred to the acceptor end of tRNA(Pro). This chain is Proline--tRNA ligase, found in Cereibacter sphaeroides (strain ATCC 17029 / ATH 2.4.9) (Rhodobacter sphaeroides).